The chain runs to 379 residues: Protein RecA (379 aa).

Low complexity predominate over residues 1–14 (MSNEIKSISSSNSS). The tract at residues 1–24 (MSNEIKSISSSNSSCPPNEARSGE) is disordered. 84–91 (GPESSGKT) contributes to the ATP binding site.

This sequence belongs to the RecA family.

It is found in the cytoplasm. In terms of biological role, can catalyze the hydrolysis of ATP in the presence of single-stranded DNA, the ATP-dependent uptake of single-stranded DNA by duplex DNA, and the ATP-dependent hybridization of homologous single-stranded DNAs. It interacts with LexA causing its activation and leading to its autocatalytic cleavage. The protein is Protein RecA of Prochlorococcus marinus (strain SARG / CCMP1375 / SS120).